An 87-amino-acid polypeptide reads, in one-letter code: MVKNAFISVISQEENRGSVEFQVVIFTNKIRRLTSHLEFHRKDFLSQRGLRKILGKRQRLLSYLSKKDKVRYTELISQLDIRELTTR.

Belongs to the universal ribosomal protein uS15 family. As to quaternary structure, part of the 30S ribosomal subunit.

It localises to the plastid. The protein resides in the chloroplast. The chain is Small ribosomal subunit protein uS15c (rps15) from Oenothera argillicola (Appalachian evening primrose).